A 129-amino-acid chain; its full sequence is MDKLHLEIVTPQGQIFNDDVSSVVLPGSEGEFGVLPNHASLISLLKAGIIDIEDKHKKHDVVAINWGYAKIDEGKVVILADGAVYVSGNSESELANSLEAARNLIESMSSDTNAFAATISKMENVVRAR.

Belongs to the ATPase epsilon chain family. F-type ATPases have 2 components, CF(1) - the catalytic core - and CF(0) - the membrane proton channel. CF(1) has five subunits: alpha(3), beta(3), gamma(1), delta(1), epsilon(1). CF(0) has three main subunits: a, b and c.

It is found in the cell inner membrane. Its function is as follows. Produces ATP from ADP in the presence of a proton gradient across the membrane. The protein is ATP synthase epsilon chain of Campylobacter concisus (strain 13826).